Here is a 557-residue protein sequence, read N- to C-terminus: Pectinesterase/pectinesterase inhibitor 18 (557 aa).

Residues 1 to 34 form the signal peptide; it reads MSNSNQPLLSKPKSLKHKNLCLVLSFVAILGSVA. Residues 47 to 203 are pectinesterase inhibitor 18; that stretch reads NNDDSLLTTS…VSRARVALAI (157 aa). The tract at residues 246–543 is pectinesterase 18; that stretch reads NVVVAKDGTG…FTVAKLIQGG (298 aa). Threonine 321 and glutamine 351 together coordinate substrate. Aspartate 374 acts as the Proton donor; for pectinesterase activity in catalysis. Aspartate 395 (nucleophile; for pectinesterase activity) is an active-site residue. Substrate contacts are provided by arginine 463 and tryptophan 465.

The protein in the N-terminal section; belongs to the PMEI family. This sequence in the C-terminal section; belongs to the pectinesterase family. As to expression, expressed in siliques, flowers, floral stems, rosette leaves and roots.

The protein resides in the secreted. The protein localises to the cell wall. It catalyses the reaction [(1-&gt;4)-alpha-D-galacturonosyl methyl ester](n) + n H2O = [(1-&gt;4)-alpha-D-galacturonosyl](n) + n methanol + n H(+). The catalysed reaction is Endohydrolysis of the N-glycosidic bond at one specific adenosine on the 28S rRNA.. It participates in glycan metabolism; pectin degradation; 2-dehydro-3-deoxy-D-gluconate from pectin: step 1/5. Acts in the modification of cell walls via demethylesterification of cell wall pectin. Inhibits the elongation phase of protein synthesis. The sequence is that of Pectinesterase/pectinesterase inhibitor 18 (PME18) from Arabidopsis thaliana (Mouse-ear cress).